Consider the following 197-residue polypeptide: MKVLQEKILNEGKVLSGDVLKVDAFLNHQIDPVLMQEIGKEFAKRFKEENITKIVTIESSGIAPAVMAALELGVKVIFARKRKSLTLQDNMYVANVYSFTKQETNEISLSRNHIDESDRVLIIDDFLANGQAALGLMSLVEQAGASIAGIGIVIEKAFQDGGKKLREQGVRVESLAEIASLDNGTVTFVQHETAEVK.

Xanthine is bound by residues Leu20 and Asn27. 128 to 132 (ANGQA) lines the 5-phospho-alpha-D-ribose 1-diphosphate pocket. A xanthine-binding site is contributed by Lys156.

Belongs to the purine/pyrimidine phosphoribosyltransferase family. Xpt subfamily. In terms of assembly, homodimer.

The protein resides in the cytoplasm. The enzyme catalyses XMP + diphosphate = xanthine + 5-phospho-alpha-D-ribose 1-diphosphate. It participates in purine metabolism; XMP biosynthesis via salvage pathway; XMP from xanthine: step 1/1. Functionally, converts the preformed base xanthine, a product of nucleic acid breakdown, to xanthosine 5'-monophosphate (XMP), so it can be reused for RNA or DNA synthesis. This Bacillus cereus (strain ATCC 10987 / NRS 248) protein is Xanthine phosphoribosyltransferase.